The primary structure comprises 158 residues: Putative tyrosine-protein phosphatase OCA1 (158 aa).

Positions 7–158 (NYGMVEENFY…DEELVFGASY (152 aa)) constitute a Tyrosine-protein phosphatase domain. The Phosphocysteine intermediate role is filled by Cys99.

This sequence belongs to the protein-tyrosine phosphatase family.

The protein resides in the cytoplasm. It catalyses the reaction O-phospho-L-tyrosyl-[protein] + H2O = L-tyrosyl-[protein] + phosphate. Functionally, putative tyrosine-protein phosphatase required for protection against superoxide stress. This chain is Putative tyrosine-protein phosphatase OCA1 (OCA1), found in Mycosarcoma maydis (Corn smut fungus).